The chain runs to 233 residues: Orotidine 5'-phosphate decarboxylase (233 aa).

Substrate contacts are provided by residues D11, K34, 61–70 (DLKLHDIPNT), T117, R179, Q188, G208, and R209. K63 acts as the Proton donor in catalysis.

The protein belongs to the OMP decarboxylase family. Type 1 subfamily. In terms of assembly, homodimer.

It catalyses the reaction orotidine 5'-phosphate + H(+) = UMP + CO2. It functions in the pathway pyrimidine metabolism; UMP biosynthesis via de novo pathway; UMP from orotate: step 2/2. In terms of biological role, catalyzes the decarboxylation of orotidine 5'-monophosphate (OMP) to uridine 5'-monophosphate (UMP). This Streptococcus pneumoniae (strain CGSP14) protein is Orotidine 5'-phosphate decarboxylase.